A 300-amino-acid polypeptide reads, in one-letter code: LysM and putative peptidoglycan-binding domain-containing protein 3 (300 aa).

At 1–216 (MAGRNQNRTA…PYYGADWGMG (216 aa)) the chain is on the extracellular side. 2 N-linked (GlcNAc...) asparagine glycosylation sites follow: asparagine 7 and asparagine 26. At serine 55 the chain carries Phosphoserine. Residues 65–109 (LTKDIQEGDTLNAVALQYCCTVADIKRVNNLISDQDFFALRSIKI) form the LysM domain. A disordered region spans residues 136-157 (PYFQEQDTVPANDSPSSSESAG). Positions 140–156 (EQDTVPANDSPSSSESA) are enriched in polar residues. An N-linked (GlcNAc...) asparagine glycan is attached at asparagine 199. A helical transmembrane segment spans residues 217-237 (WWTAVVIMLIVGIITPVFYLL). Over 238-300 (YYEILAKVDV…LYRQDPQARD (63 aa)) the chain is Cytoplasmic. The disordered stretch occupies residues 253–300 (VDSSHLHPGLTPPSHHREMGNAIGPTKGIPVGQQDDHRLYRQDPQARD). Basic and acidic residues predominate over residues 286–300 (QDDHRLYRQDPQARD).

It is found in the cell membrane. The protein localises to the golgi apparatus. In terms of biological role, essential for Golgi structural integrity. This Rattus norvegicus (Rat) protein is LysM and putative peptidoglycan-binding domain-containing protein 3 (Lysmd3).